Consider the following 581-residue polypeptide: Fibrous sheath-interacting protein 1 (581 aa).

A disordered region spans residues 1-77; sequence MDIIKGNLDG…SNDDKQESCS (77 aa). Positions 14–30 are enriched in polar residues; the sequence is PASNSRIRPGSRSSNAS. A compositionally biased stretch (basic and acidic residues) spans 52 to 77; that stretch reads GKEDHSESSNTENRRTSNDDKQESCS. Ser-87 carries the phosphoserine modification. Positions 105–153 form a coiled coil; it reads EPKLKELDSQLQDAIQKMKKLDKILAKKQRREKEIKKQGLEMRIKLWEE. 2 disordered regions span residues 338 to 365 and 555 to 581; these read SSFSPRLENRNNQKPDRDGERNMEVTPG and HLKLSSPENTIADEQETKDAAEECKEP. 2 stretches are compositionally biased toward basic and acidic residues: residues 344–360 and 569–581; these read LENRNNQKPDRDGERNM and QETKDAAEECKEP.

It belongs to the FSIP1 family.

This Homo sapiens (Human) protein is Fibrous sheath-interacting protein 1 (FSIP1).